The sequence spans 293 residues: Urease accessory protein UreD 2 (293 aa).

Belongs to the UreD family. UreD, UreF and UreG form a complex that acts as a GTP-hydrolysis-dependent molecular chaperone, activating the urease apoprotein by helping to assemble the nickel containing metallocenter of UreC. The UreE protein probably delivers the nickel.

The protein resides in the cytoplasm. Its function is as follows. Required for maturation of urease via the functional incorporation of the urease nickel metallocenter. This chain is Urease accessory protein UreD 2, found in Streptomyces griseus subsp. griseus (strain JCM 4626 / CBS 651.72 / NBRC 13350 / KCC S-0626 / ISP 5235).